The chain runs to 495 residues: Protein nucleotidyltransferase YdiU (495 aa).

Residues G92, G94, R95, K114, D126, G127, R177, and R184 each contribute to the ATP site. The active-site Proton acceptor is the D261. The Mg(2+) site is built by N262 and D271. D271 serves as a coordination point for ATP.

This sequence belongs to the SELO family. Mg(2+) is required as a cofactor. Requires Mn(2+) as cofactor.

The catalysed reaction is L-seryl-[protein] + ATP = 3-O-(5'-adenylyl)-L-seryl-[protein] + diphosphate. It catalyses the reaction L-threonyl-[protein] + ATP = 3-O-(5'-adenylyl)-L-threonyl-[protein] + diphosphate. The enzyme catalyses L-tyrosyl-[protein] + ATP = O-(5'-adenylyl)-L-tyrosyl-[protein] + diphosphate. It carries out the reaction L-histidyl-[protein] + UTP = N(tele)-(5'-uridylyl)-L-histidyl-[protein] + diphosphate. The catalysed reaction is L-seryl-[protein] + UTP = O-(5'-uridylyl)-L-seryl-[protein] + diphosphate. It catalyses the reaction L-tyrosyl-[protein] + UTP = O-(5'-uridylyl)-L-tyrosyl-[protein] + diphosphate. Nucleotidyltransferase involved in the post-translational modification of proteins. It can catalyze the addition of adenosine monophosphate (AMP) or uridine monophosphate (UMP) to a protein, resulting in modifications known as AMPylation and UMPylation. In Bordetella bronchiseptica (strain ATCC BAA-588 / NCTC 13252 / RB50) (Alcaligenes bronchisepticus), this protein is Protein nucleotidyltransferase YdiU.